The primary structure comprises 369 residues: Cyclin-dependent kinase 5 activator 2 (369 aa).

A compositionally biased stretch (polar residues) spans 1 to 11; it reads MGTVLSLSPAS. Disordered stretches follow at residues 1–55, 72–176, and 330–369; these read MGTV…SRLK, ASAK…SPRR, and EAAASTGGPPSGSSASTTSSSSARDSCATGAKHWTMNLDR. A lipid anchor (N-myristoyl glycine) is attached at Gly2. The span at 74–84 shows a compositional bias: basic residues; it reads AKKKKGSKKVT. At Thr84 the chain carries Phosphothreonine. Positions 99–112 are enriched in basic and acidic residues; sequence RNRENLLRKGRDGP. Residues 122–144 show a composition bias toward low complexity; it reads AVPVPTVPTTAATCEPPSGGSAA. Pro residues predominate over residues 145-171; sequence APPPGSGGGKPPPPPPPAPQAAPPAPG. Over residues 331–352 the composition is skewed to low complexity; the sequence is AAASTGGPPSGSSASTTSSSSA.

Belongs to the cyclin-dependent kinase 5 activator family. In terms of assembly, heterodimer of a catalytic subunit and a regulatory subunit. Myristoylated. The Gly-2-Ala mutant is absent of the cell periphery, suggesting that a proper myristoylation signal is essential for the proper distribution of CDK5R2 (p39).

It localises to the cell membrane. Its function is as follows. Activator of CDK5/TPKII. The chain is Cyclin-dependent kinase 5 activator 2 (Cdk5r2) from Mus musculus (Mouse).